Here is a 443-residue protein sequence, read N- to C-terminus: ASTRA-associated protein 1 (443 aa).

4 WD repeats span residues 23-67 (YHKR…PITH), 71-110 (EGNS…QLSI), 258-295 (HYPN…QLET), and 318-359 (KVHL…VEQT). The tract at residues 372-391 (SSMGDLTNGSGSNTESSSKS) is disordered. The span at 378–391 (TNGSGSNTESSSKS) shows a compositional bias: low complexity.

Belongs to the WD repeat ASA1 family. Component of the ASTRA chromatin remodeling machinery complex composed of at least RVB1, RVB2, TRA1, TEL2, TTI1 and TTI2.

It is found in the nucleus. Its function is as follows. Component of the ASTRA complex involved in chromatin remodeling. This Saccharomyces cerevisiae (strain RM11-1a) (Baker's yeast) protein is ASTRA-associated protein 1 (ASA1).